The sequence spans 169 residues: Cytochrome c oxidase subunit 4 isoform 1, mitochondrial (169 aa).

A mitochondrion-targeting transit peptide spans 1-22 (MLATRALSLIGKRAISTSVCLR). Residues 23 to 98 (AHGSVVKSED…SFAEMNKGTN (76 aa)) lie on the Mitochondrial matrix side of the membrane. An N6-acetyllysine; alternate modification is found at lysine 29. At lysine 29 the chain carries N6-succinyllysine; alternate. At lysine 53 the chain carries N6-acetyllysine. A phosphoserine mark is found at serine 56 and serine 58. Residue lysine 60 is modified to N6-acetyllysine; alternate. At lysine 60 the chain carries N6-succinyllysine; alternate. N6-acetyllysine is present on lysine 67. Residues 99–124 (EWKTVVGLAMFFIGFTALVLIWEKSY) form a helical membrane-spanning segment. The Mitochondrial intermembrane segment spans residues 125–169 (VYGPIPHTFDRDWVAMQTKRMLDMKVNPIQGFSAKWDYNKNEWKK).

The protein belongs to the cytochrome c oxidase IV family. Component of the cytochrome c oxidase (complex IV, CIV), a multisubunit enzyme composed of 14 subunits. The complex is composed of a catalytic core of 3 subunits MT-CO1, MT-CO2 and MT-CO3, encoded in the mitochondrial DNA, and 11 supernumerary subunits COX4I, COX5A, COX5B, COX6A, COX6B, COX6C, COX7A, COX7B, COX7C, COX8 and NDUFA4, which are encoded in the nuclear genome. The complex exists as a monomer or a dimer and forms supercomplexes (SCs) in the inner mitochondrial membrane with NADH-ubiquinone oxidoreductase (complex I, CI) and ubiquinol-cytochrome c oxidoreductase (cytochrome b-c1 complex, complex III, CIII), resulting in different assemblies (supercomplex SCI(1)III(2)IV(1) and megacomplex MCI(2)III(2)IV(2)). Interacts with PHB2; the interaction decreases in absence of SPHK2. Interacts with AFG1L. Interacts with ABCB7; this interaction allows the regulation of cellular iron homeostasis and cellular reactive oxygen species (ROS) levels in cardiomyocytes. Interacts with FLVCR2; this interaction occurs in the absence of heme and is disrupted upon heme binding. Interacts with IRGC.

The protein resides in the mitochondrion inner membrane. Its pathway is energy metabolism; oxidative phosphorylation. Component of the cytochrome c oxidase, the last enzyme in the mitochondrial electron transport chain which drives oxidative phosphorylation. The respiratory chain contains 3 multisubunit complexes succinate dehydrogenase (complex II, CII), ubiquinol-cytochrome c oxidoreductase (cytochrome b-c1 complex, complex III, CIII) and cytochrome c oxidase (complex IV, CIV), that cooperate to transfer electrons derived from NADH and succinate to molecular oxygen, creating an electrochemical gradient over the inner membrane that drives transmembrane transport and the ATP synthase. Cytochrome c oxidase is the component of the respiratory chain that catalyzes the reduction of oxygen to water. Electrons originating from reduced cytochrome c in the intermembrane space (IMS) are transferred via the dinuclear copper A center (CU(A)) of subunit 2 and heme A of subunit 1 to the active site in subunit 1, a binuclear center (BNC) formed by heme A3 and copper B (CU(B)). The BNC reduces molecular oxygen to 2 water molecules using 4 electrons from cytochrome c in the IMS and 4 protons from the mitochondrial matrix. The polypeptide is Cytochrome c oxidase subunit 4 isoform 1, mitochondrial (Cox4i1) (Rattus norvegicus (Rat)).